Consider the following 346-residue polypeptide: uncharacterized protein (346 aa).

Histidine 65 contributes to the Zn(2+) binding site. Residue aspartate 67 is part of the active site. A Zn(2+)-binding site is contributed by aspartate 89. The active-site Proton acceptor is the glutamate 115. Zn(2+)-binding residues include glutamate 116, glutamate 145, and histidine 319.

It belongs to the peptidase M20A family. Requires Zn(2+) as cofactor. The cofactor is Co(2+).

This is an uncharacterized protein from Methanocaldococcus jannaschii (strain ATCC 43067 / DSM 2661 / JAL-1 / JCM 10045 / NBRC 100440) (Methanococcus jannaschii).